Reading from the N-terminus, the 590-residue chain is Arginine--tRNA ligase (590 aa).

The short motif at 134 to 144 (ANPTGPMHVGH) is the 'HIGH' region element.

It belongs to the class-I aminoacyl-tRNA synthetase family. In terms of assembly, monomer.

The protein resides in the cytoplasm. The catalysed reaction is tRNA(Arg) + L-arginine + ATP = L-arginyl-tRNA(Arg) + AMP + diphosphate. This chain is Arginine--tRNA ligase, found in Beijerinckia indica subsp. indica (strain ATCC 9039 / DSM 1715 / NCIMB 8712).